A 622-amino-acid chain; its full sequence is Sodium/potassium/calcium exchanger 4 (622 aa).

Positions 1–38 (MALRGTLRPLKVRRRREMLPQQVGFVCAVLALVCCASG) are cleaved as a signal peptide. The Extracellular segment spans residues 39 to 97 (LFGSLGHKTASASKRVLPDTWRNRKLMAPVNGTQTAKNCTDPAIHEFPTDLFSNKERQH). N69 and N76 each carry an N-linked (GlcNAc...) asparagine glycan. The helical transmembrane segment at 98–118 (GAVLLHILGALYMFYALAIVC) threads the bilayer. The Cytoplasmic portion of the chain corresponds to 119–142 (DDFFVPSLEKICERLHLSEDVAGA). One copy of the Alpha-1 repeat lies at 139 to 179 (VAGATFMAAGSSTPELFASVIGVFITHGDVGVGTIVGSAVF). The helical transmembrane segment at 143-163 (TFMAAGSSTPELFASVIGVFI) threads the bilayer. Residues 164–172 (THGDVGVGT) lie on the Extracellular side of the membrane. Residues 173–193 (IVGSAVFNILCIIGVCGLFAG) traverse the membrane as a helical segment. At 194 to 200 (QVVRLTW) the chain is on the cytoplasmic side. The chain crosses the membrane as a helical span at residues 201–221 (WAVCRDSVYYTISVIVLIVFI). The Extracellular segment spans residues 222–224 (YDE). A helical membrane pass occupies residues 225–245 (QIVWWEGLVLIILYVFYILIM). At 246–457 (KYNVKMQAFF…RWEKFFMVTF (212 aa)) the chain is on the cytoplasmic side. The segment at 358 to 410 (ANGVSSKPLQNGRHENIENGNVPVENPEDPQQNQEQQPPPQPPPPEPEPVEAD) is disordered. Over residues 380–393 (PVENPEDPQQNQEQ) the composition is skewed to low complexity. Over residues 394-404 (QPPPQPPPPEP) the composition is skewed to pro residues. Residues 458–478 (ITATLWIAVFSYIMVWLVTII) traverse the membrane as a helical segment. Position 479 (G479) is a topological domain, extracellular. A helical membrane pass occupies residues 480–500 (YTLGIPDVIMGITFLAAGTSV). The Alpha-2 repeat unit spans residues 495–526 (AAGTSVPDCMASLIVARQGLGDMAVSNTIGSN). Topologically, residues 501 to 526 (PDCMASLIVARQGLGDMAVSNTIGSN) are cytoplasmic. Residues 527 to 547 (VFDILVGLGVPWGLQTMVVNY) traverse the membrane as a helical segment. Topologically, residues 548-557 (GSTVKINSRG) are extracellular. Residues 558–578 (LVYSVVLLLGSVALTVLGIHL) form a helical membrane-spanning segment. Over 579–586 (NKWRLDRK) the chain is Cytoplasmic. A helical membrane pass occupies residues 587 to 607 (LGVYVLVLYAIFLCFSIMIEF). Topologically, residues 608-622 (NVFTFVNLPMCREDD) are extracellular.

The protein belongs to the Ca(2+):cation antiporter (CaCA) (TC 2.A.19) family. SLC24A subfamily. Expressed abundantly in all regions of the brain, aorta, lung and thymus. Expressed at lower levels in the stomach and intestine.

The protein localises to the cell membrane. It localises to the cytoplasm. It catalyses the reaction Ca(2+)(out) + K(+)(out) + 4 Na(+)(in) = Ca(2+)(in) + K(+)(in) + 4 Na(+)(out). Functionally, calcium, potassium:sodium antiporter that transports 1 Ca(2+) and 1 K(+) in exchange for 4 Na(+). Controls the rapid response termination and proper regulation of adaptation in olfactory sensory neurons (OSNs) which subsequently influences how odor information is encoded and perceived. May play a role in calcium transport during amelogenesis. This Homo sapiens (Human) protein is Sodium/potassium/calcium exchanger 4.